The primary structure comprises 206 residues: Dephospho-CoA kinase (206 aa).

Residues 4–200 (TVALTGGIGS…ASYLKLASQF (197 aa)) enclose the DPCK domain. 12 to 17 (GSGKST) lines the ATP pocket.

It belongs to the CoaE family.

It is found in the cytoplasm. The catalysed reaction is 3'-dephospho-CoA + ATP = ADP + CoA + H(+). It participates in cofactor biosynthesis; coenzyme A biosynthesis; CoA from (R)-pantothenate: step 5/5. Catalyzes the phosphorylation of the 3'-hydroxyl group of dephosphocoenzyme A to form coenzyme A. The polypeptide is Dephospho-CoA kinase (Salmonella choleraesuis (strain SC-B67)).